The chain runs to 58 residues: Large ribosomal subunit protein bL32 (58 aa).

The protein belongs to the bacterial ribosomal protein bL32 family.

The protein is Large ribosomal subunit protein bL32 of Staphylococcus aureus (strain NCTC 8325 / PS 47).